The following is a 186-amino-acid chain: Adenylate kinase (186 aa).

Position 11–16 (11–16 (GAGKGT)) interacts with ATP. The tract at residues 31–60 (STGDILRAAVKNGTAMGIEAKKYMDAGDLV) is NMP. Residues T32, R37, 58-60 (DLV), 86-89 (GFPR), and Q93 each bind AMP. Residues 127 to 137 (GRAIKEGRSDD) are LID. R128 lines the ATP pocket. Residues R134 and R145 each coordinate AMP. G173 contributes to the ATP binding site.

Belongs to the adenylate kinase family. In terms of assembly, monomer.

Its subcellular location is the cytoplasm. The enzyme catalyses AMP + ATP = 2 ADP. The protein operates within purine metabolism; AMP biosynthesis via salvage pathway; AMP from ADP: step 1/1. Functionally, catalyzes the reversible transfer of the terminal phosphate group between ATP and AMP. Plays an important role in cellular energy homeostasis and in adenine nucleotide metabolism. This chain is Adenylate kinase, found in Leptospira biflexa serovar Patoc (strain Patoc 1 / Ames).